Reading from the N-terminus, the 89-residue chain is Small ribosomal subunit protein uS15 (89 aa).

It belongs to the universal ribosomal protein uS15 family. As to quaternary structure, part of the 30S ribosomal subunit. Forms a bridge to the 50S subunit in the 70S ribosome, contacting the 23S rRNA.

Its function is as follows. One of the primary rRNA binding proteins, it binds directly to 16S rRNA where it helps nucleate assembly of the platform of the 30S subunit by binding and bridging several RNA helices of the 16S rRNA. Forms an intersubunit bridge (bridge B4) with the 23S rRNA of the 50S subunit in the ribosome. This chain is Small ribosomal subunit protein uS15, found in Coxiella burnetii (strain CbuK_Q154) (Coxiella burnetii (strain Q154)).